Reading from the N-terminus, the 99-residue chain is Malonate decarboxylase acyl carrier protein (99 aa).

At Ser25 the chain carries O-(phosphoribosyl dephospho-coenzyme A)serine.

Belongs to the MdcC family. Covalently binds the prosthetic group of malonate decarboxylase.

It localises to the cytoplasm. In terms of biological role, subunit of malonate decarboxylase, it is an acyl carrier protein to which acetyl and malonyl thioester residues are bound via a 2'-(5''-phosphoribosyl)-3'-dephospho-CoA prosthetic group and turn over during the catalytic mechanism. In Pseudomonas syringae pv. tomato (strain ATCC BAA-871 / DC3000), this protein is Malonate decarboxylase acyl carrier protein.